Reading from the N-terminus, the 213-residue chain is Histidine biosynthesis bifunctional protein HisIE (213 aa).

Residues 1-114 (MLTTEKYQGL…FHPALTDFSF (114 aa)) are phosphoribosyl-AMP cyclohydrolase. The phosphoribosyl-ATP pyrophosphohydrolase stretch occupies residues 115–213 (LFQLENIISI…RVRSKLKKKH (99 aa)).

It in the N-terminal section; belongs to the PRA-CH family. In the C-terminal section; belongs to the PRA-PH family.

Its subcellular location is the cytoplasm. The enzyme catalyses 1-(5-phospho-beta-D-ribosyl)-ATP + H2O = 1-(5-phospho-beta-D-ribosyl)-5'-AMP + diphosphate + H(+). It catalyses the reaction 1-(5-phospho-beta-D-ribosyl)-5'-AMP + H2O = 1-(5-phospho-beta-D-ribosyl)-5-[(5-phospho-beta-D-ribosylamino)methylideneamino]imidazole-4-carboxamide. Its pathway is amino-acid biosynthesis; L-histidine biosynthesis; L-histidine from 5-phospho-alpha-D-ribose 1-diphosphate: step 2/9. It functions in the pathway amino-acid biosynthesis; L-histidine biosynthesis; L-histidine from 5-phospho-alpha-D-ribose 1-diphosphate: step 3/9. In Blochmanniella floridana, this protein is Histidine biosynthesis bifunctional protein HisIE.